Consider the following 388-residue polypeptide: uncharacterized protein (388 aa).

The next 8 helical transmembrane spans lie at 15–37 (VISA…LLVL), 97–119 (GFSK…VVFY), 129–151 (PIWG…TFLL), 158–175 (FIYI…FLSA), 179–196 (MMLA…VLFK), 203–225 (LAFW…YLSQ), 304–326 (IFIV…YIYF), and 347–369 (LLSV…DALL).

It localises to the cell membrane. This is an uncharacterized protein from Aquifex aeolicus (strain VF5).